The primary structure comprises 348 residues: Oxygen-dependent coproporphyrinogen-III oxidase (348 aa).

Ser-104 is a binding site for substrate. A divalent metal cation-binding residues include His-108 and His-118. His-118 acts as the Proton donor in catalysis. Asn-120–Arg-122 is a binding site for substrate. A divalent metal cation is bound by residues His-152 and His-182. Residues Tyr-272–Glu-307 form an important for dimerization region.

This sequence belongs to the aerobic coproporphyrinogen-III oxidase family. In terms of assembly, homodimer. The cofactor is a divalent metal cation.

It localises to the cytoplasm. It catalyses the reaction coproporphyrinogen III + O2 + 2 H(+) = protoporphyrinogen IX + 2 CO2 + 2 H2O. Its pathway is porphyrin-containing compound metabolism; protoporphyrin-IX biosynthesis; protoporphyrinogen-IX from coproporphyrinogen-III (O2 route): step 1/1. In terms of biological role, involved in the heme and chlorophyll biosynthesis. Catalyzes the aerobic oxidative decarboxylation of propionate groups of rings A and B of coproporphyrinogen-III to yield the vinyl groups in protoporphyrinogen-IX. This Prochlorococcus marinus (strain NATL2A) protein is Oxygen-dependent coproporphyrinogen-III oxidase.